Here is a 472-residue protein sequence, read N- to C-terminus: Siroheme synthase 2 (472 aa).

A precorrin-2 dehydrogenase /sirohydrochlorin ferrochelatase region spans residues 1-204 (MDYFPIFCQL…EDQVQVEQHV (204 aa)). Residues 22-23 (EV) and 43-44 (CE) each bind NAD(+). Ser128 carries the post-translational modification Phosphoserine. Residues 216-472 (GEVVLVGAGP…GMKEQVERVG (257 aa)) form a uroporphyrinogen-III C-methyltransferase region. Pro225 provides a ligand contact to S-adenosyl-L-methionine. Catalysis depends on Asp248, which acts as the Proton acceptor. The Proton donor role is filled by Lys270. S-adenosyl-L-methionine is bound by residues 301 to 303 (GGD), Ile306, 331 to 332 (TA), Met382, and Gly411.

In the N-terminal section; belongs to the precorrin-2 dehydrogenase / sirohydrochlorin ferrochelatase family. This sequence in the C-terminal section; belongs to the precorrin methyltransferase family.

The enzyme catalyses uroporphyrinogen III + 2 S-adenosyl-L-methionine = precorrin-2 + 2 S-adenosyl-L-homocysteine + H(+). It carries out the reaction precorrin-2 + NAD(+) = sirohydrochlorin + NADH + 2 H(+). It catalyses the reaction siroheme + 2 H(+) = sirohydrochlorin + Fe(2+). It participates in cofactor biosynthesis; adenosylcobalamin biosynthesis; precorrin-2 from uroporphyrinogen III: step 1/1. Its pathway is cofactor biosynthesis; adenosylcobalamin biosynthesis; sirohydrochlorin from precorrin-2: step 1/1. The protein operates within porphyrin-containing compound metabolism; siroheme biosynthesis; precorrin-2 from uroporphyrinogen III: step 1/1. It functions in the pathway porphyrin-containing compound metabolism; siroheme biosynthesis; siroheme from sirohydrochlorin: step 1/1. It participates in porphyrin-containing compound metabolism; siroheme biosynthesis; sirohydrochlorin from precorrin-2: step 1/1. Its function is as follows. Multifunctional enzyme that catalyzes the SAM-dependent methylations of uroporphyrinogen III at position C-2 and C-7 to form precorrin-2 via precorrin-1. Then it catalyzes the NAD-dependent ring dehydrogenation of precorrin-2 to yield sirohydrochlorin. Finally, it catalyzes the ferrochelation of sirohydrochlorin to yield siroheme. The chain is Siroheme synthase 2 from Yersinia enterocolitica serotype O:8 / biotype 1B (strain NCTC 13174 / 8081).